We begin with the raw amino-acid sequence, 219 residues long: 7-cyano-7-deazaguanine synthase (219 aa).

Residue 10–20 (FSGGQDSTTCL) coordinates ATP. Zn(2+) is bound by residues Cys-188, Cys-197, Cys-200, and Cys-203.

This sequence belongs to the QueC family. In terms of assembly, homodimer. It depends on Zn(2+) as a cofactor.

It carries out the reaction 7-carboxy-7-deazaguanine + NH4(+) + ATP = 7-cyano-7-deazaguanine + ADP + phosphate + H2O + H(+). Its pathway is purine metabolism; 7-cyano-7-deazaguanine biosynthesis. Catalyzes the ATP-dependent conversion of 7-carboxy-7-deazaguanine (CDG) to 7-cyano-7-deazaguanine (preQ(0)). In Clostridium botulinum (strain Kyoto / Type A2), this protein is 7-cyano-7-deazaguanine synthase.